A 305-amino-acid polypeptide reads, in one-letter code: Olfactory receptor 4B13 (305 aa).

The Extracellular portion of the chain corresponds to 1–25 (MANKNNVTELIFTGLFQDPEVQKVC). N-linked (GlcNAc...) asparagine glycosylation is present at Asn6. The chain crosses the membrane as a helical span at residues 26–46 (FVLFLPVYLATLLGNSLILVA). Topologically, residues 47-55 (VSISKTLHS) are cytoplasmic. A helical membrane pass occupies residues 56-76 (PMYFFLSSLSLVEICYSSTIV). Topologically, residues 77–95 (PKFITDLLAKVKTISLKGC) are extracellular. Cys95 and Cys187 are disulfide-bonded. Residues 96–116 (LTQIFFSHFFGVVEVILLVVM) form a helical membrane-spanning segment. The Cytoplasmic portion of the chain corresponds to 117-141 (AYDRYVAICKPLHYMNIMSRQVCHM). A helical transmembrane segment spans residues 142 to 162 (LVAGSWLGGFIHSIIQIIITI). Residues 163 to 202 (PLPFCGPNVIDHYFCDLQQLFKLACTDTFMEGFIVMANSG) lie on the Extracellular side of the membrane. A helical membrane pass occupies residues 203–223 (LISIVSLFILVSSYAVILISL). Over 224 to 236 (RKRSAEGRRKALS) the chain is Cytoplasmic. Residues 237–257 (TCASHITVVILFFVPGAFIYM) form a helical membrane-spanning segment. The Extracellular portion of the chain corresponds to 258–266 (RPSSTFTED). Residues 267 to 287 (KLVSVFYTVITPMLNPIVYTL) traverse the membrane as a helical segment. Residues 288 to 305 (RNTEMKNAIRMSWKQKDS) are Cytoplasmic-facing.

This sequence belongs to the G-protein coupled receptor 1 family.

Its subcellular location is the cell membrane. In terms of biological role, odorant receptor. The polypeptide is Olfactory receptor 4B13 (Mus musculus (Mouse)).